The sequence spans 472 residues: Eukaryotic translation initiation factor 2 subunit 3, Y-linked (472 aa).

A2 carries the N-acetylalanine modification. Residue S16 is modified to Phosphoserine. A tr-type G domain is found at 39-247 (QATINIGTIG…YIVKKIPVPL (209 aa)). The interval 48-55 (GHVAHGKS) is G1. Position 51–56 (51–56 (AHGKST)) interacts with GTP. The G2 stretch occupies residues 76–80 (NITIK). Positions 134-137 (DCPG) are G3. GTP contacts are provided by residues 190 to 193 (NKID) and 225 to 227 (SAQ). The interval 190–193 (NKID) is G4. A G5 region spans residues 225-227 (SAQ).

The protein belongs to the TRAFAC class translation factor GTPase superfamily. Classic translation factor GTPase family. EIF2G subfamily. In terms of assembly, eIF2 is a heterotrimer composed of an alpha (EIF2S1), a beta (EIF2S2) and a gamma (Eif2s3x and Eif2s3y) chain. eIF2 is member of the 43S pre-initiation complex (43S PIC). As to expression, widely expressed in males.

The catalysed reaction is GTP + H2O = GDP + phosphate + H(+). In terms of biological role, member of the eIF2 complex that functions in the early steps of protein synthesis by forming a ternary complex with GTP and initiator tRNA. This complex binds to a 40S ribosomal subunit, followed by mRNA binding to form the 43S pre-initiation complex (43S PIC). Junction of the 60S ribosomal subunit to form the 80S initiation complex is preceded by hydrolysis of the GTP bound to eIF2 and release of an eIF2-GDP binary complex. In order for eIF2 to recycle and catalyze another round of initiation, the GDP bound to eIF2 must exchange with GTP by way of a reaction catalyzed by eIF-2B. Along with its paralog on chromosome X, may contribute to spermatogenesis up to the round spermatid stage. This Rattus norvegicus (Rat) protein is Eukaryotic translation initiation factor 2 subunit 3, Y-linked (Eif2s3y).